The primary structure comprises 106 residues: MGKLTLLLLVLLGWLQYSLWLGKNGIHDYVRVKNDVAMQERNNSKLKARNDQLSAEIDDLTGGQEAIEERSRSELGMIKPGETFYRLIIDKSKENTSRPSTPNNTQ.

At 1–3 the chain is on the cytoplasmic side; it reads MGK. A helical membrane pass occupies residues 4-21; that stretch reads LTLLLLVLLGWLQYSLWL. Residues 22 to 106 are Periplasmic-facing; the sequence is GKNGIHDYVR…SRPSTPNNTQ (85 aa). Residues 29–70 adopt a coiled-coil conformation; the sequence is YVRVKNDVAMQERNNSKLKARNDQLSAEIDDLTGGQEAIEER.

This sequence belongs to the FtsB family. As to quaternary structure, part of a complex composed of FtsB, FtsL and FtsQ.

It localises to the cell inner membrane. Functionally, essential cell division protein. May link together the upstream cell division proteins, which are predominantly cytoplasmic, with the downstream cell division proteins, which are predominantly periplasmic. This Photorhabdus laumondii subsp. laumondii (strain DSM 15139 / CIP 105565 / TT01) (Photorhabdus luminescens subsp. laumondii) protein is Cell division protein FtsB.